Consider the following 609-residue polypeptide: Wee1-like protein kinase (609 aa).

Over residues 1 to 10 the composition is skewed to basic and acidic residues; that stretch reads MAFRQSEHEM. Disordered stretches follow at residues 1 to 88 and 147 to 166; these read MAFR…SMSP and PLHN…PFTP. Phosphoserine occurs at positions 23, 25, and 27. Over residues 37–48 the composition is skewed to basic and acidic residues; that stretch reads RFADDDFDKDTP. Thr-47 is modified (phosphothreonine). Ser-52 is subject to Phosphoserine. Residues 153-165 show a composition bias toward polar residues; it reads LPTQDTANVNPFT. Residue Thr-165 is modified to Phosphothreonine. A Phosphoserine modification is found at Ser-168. A Protein kinase domain is found at 239–517; that stretch reads FMQVNVIGVG…SQSIFSHPIL (279 aa). Residues 245 to 253 and Lys-268 each bind ATP; that span reads IGVGEFGVV. Asp-361 functions as the Proton acceptor in the catalytic mechanism. Mg(2+) is bound by residues Asn-366 and Asp-412.

The protein belongs to the protein kinase superfamily. Ser/Thr protein kinase family. WEE1 subfamily. Mg(2+) serves as cofactor. Post-translationally, phosphorylated during M and G1 phases. As to expression, expressed in embryos; expression remains high in the proliferating cells of the central nervous system well after cells in the rest of the embryo have ceased dividing.

It localises to the nucleus. The catalysed reaction is L-tyrosyl-[protein] + ATP = O-phospho-L-tyrosyl-[protein] + ADP + H(+). Negatively regulated by phosphorylation in the M-phase. In terms of biological role, acts as a negative regulator of entry into mitosis (G2 to M transition). This kinase specifically phosphorylates and inactivates cyclin B1-complexed CDC2. This is Wee1-like protein kinase from Drosophila melanogaster (Fruit fly).